The sequence spans 327 residues: Phenylalanine--tRNA ligase alpha subunit (327 aa).

A Mg(2+)-binding site is contributed by E252.

The protein belongs to the class-II aminoacyl-tRNA synthetase family. Phe-tRNA synthetase alpha subunit type 1 subfamily. In terms of assembly, tetramer of two alpha and two beta subunits. It depends on Mg(2+) as a cofactor.

The protein resides in the cytoplasm. It carries out the reaction tRNA(Phe) + L-phenylalanine + ATP = L-phenylalanyl-tRNA(Phe) + AMP + diphosphate + H(+). The sequence is that of Phenylalanine--tRNA ligase alpha subunit from Shigella dysenteriae serotype 1 (strain Sd197).